A 259-amino-acid chain; its full sequence is Deoxyribose-phosphate aldolase (259 aa).

Aspartate 102 acts as the Proton donor/acceptor in catalysis. Catalysis depends on lysine 166, which acts as the Schiff-base intermediate with acetaldehyde. The Proton donor/acceptor role is filled by lysine 200.

Belongs to the DeoC/FbaB aldolase family. DeoC type 2 subfamily.

It is found in the cytoplasm. It carries out the reaction 2-deoxy-D-ribose 5-phosphate = D-glyceraldehyde 3-phosphate + acetaldehyde. The protein operates within carbohydrate degradation; 2-deoxy-D-ribose 1-phosphate degradation; D-glyceraldehyde 3-phosphate and acetaldehyde from 2-deoxy-alpha-D-ribose 1-phosphate: step 2/2. Functionally, catalyzes a reversible aldol reaction between acetaldehyde and D-glyceraldehyde 3-phosphate to generate 2-deoxy-D-ribose 5-phosphate. The sequence is that of Deoxyribose-phosphate aldolase from Vibrio cholerae serotype O1 (strain ATCC 39315 / El Tor Inaba N16961).